Consider the following 66-residue polypeptide: Large ribosomal subunit protein bL33 (66 aa).

Belongs to the bacterial ribosomal protein bL33 family.

The sequence is that of Large ribosomal subunit protein bL33 from Wolbachia pipientis wMel.